The chain runs to 398 residues: Bifunctional enzyme IspD/IspF (398 aa).

Residues 1–234 (MAKSQRTAVV…ARLAAQLGDI (234 aa)) are 2-C-methyl-D-erythritol 4-phosphate cytidylyltransferase. Positions 235 to 398 (RTGTGYDVHA…LPFNEKTWSV (164 aa)) are 2-C-methyl-D-erythritol 2,4-cyclodiphosphate synthase. Residues aspartate 241 and histidine 243 each contribute to the a divalent metal cation site. Residues 241–243 (DVH) and 267–268 (HS) each bind 4-CDP-2-C-methyl-D-erythritol 2-phosphate. Histidine 275 is an a divalent metal cation binding site. 4-CDP-2-C-methyl-D-erythritol 2-phosphate contacts are provided by residues 289–291 (DIG), 365–368 (TTSE), phenylalanine 372, and arginine 375.

It in the N-terminal section; belongs to the IspD/TarI cytidylyltransferase family. IspD subfamily. This sequence in the C-terminal section; belongs to the IspF family. Requires a divalent metal cation as cofactor.

The catalysed reaction is 2-C-methyl-D-erythritol 4-phosphate + CTP + H(+) = 4-CDP-2-C-methyl-D-erythritol + diphosphate. It catalyses the reaction 4-CDP-2-C-methyl-D-erythritol 2-phosphate = 2-C-methyl-D-erythritol 2,4-cyclic diphosphate + CMP. Its pathway is isoprenoid biosynthesis; isopentenyl diphosphate biosynthesis via DXP pathway; isopentenyl diphosphate from 1-deoxy-D-xylulose 5-phosphate: step 2/6. The protein operates within isoprenoid biosynthesis; isopentenyl diphosphate biosynthesis via DXP pathway; isopentenyl diphosphate from 1-deoxy-D-xylulose 5-phosphate: step 4/6. Bifunctional enzyme that catalyzes the formation of 4-diphosphocytidyl-2-C-methyl-D-erythritol from CTP and 2-C-methyl-D-erythritol 4-phosphate (MEP) (IspD), and catalyzes the conversion of 4-diphosphocytidyl-2-C-methyl-D-erythritol 2-phosphate (CDP-ME2P) to 2-C-methyl-D-erythritol 2,4-cyclodiphosphate (ME-CPP) with a corresponding release of cytidine 5-monophosphate (CMP) (IspF). The polypeptide is Bifunctional enzyme IspD/IspF (Bradyrhizobium diazoefficiens (strain JCM 10833 / BCRC 13528 / IAM 13628 / NBRC 14792 / USDA 110)).